The chain runs to 202 residues: Probable septum site-determining protein MinC (202 aa).

This sequence belongs to the MinC family. As to quaternary structure, interacts with MinD and FtsZ.

Cell division inhibitor that blocks the formation of polar Z ring septums. Rapidly oscillates between the poles of the cell to destabilize FtsZ filaments that have formed before they mature into polar Z rings. Prevents FtsZ polymerization. The protein is Probable septum site-determining protein MinC of Dictyoglomus turgidum (strain DSM 6724 / Z-1310).